The following is a 229-amino-acid chain: 7-cyano-7-deazaguanine synthase (229 aa).

ATP is bound at residue 8-18; that stretch reads CSGGLDSSVIA. Zn(2+) is bound by residues cysteine 190, cysteine 203, cysteine 206, and cysteine 209.

The protein belongs to the QueC family. The cofactor is Zn(2+).

It catalyses the reaction 7-carboxy-7-deazaguanine + NH4(+) + ATP = 7-cyano-7-deazaguanine + ADP + phosphate + H2O + H(+). It participates in purine metabolism; 7-cyano-7-deazaguanine biosynthesis. Catalyzes the ATP-dependent conversion of 7-carboxy-7-deazaguanine (CDG) to 7-cyano-7-deazaguanine (preQ(0)). This Methanopyrus kandleri (strain AV19 / DSM 6324 / JCM 9639 / NBRC 100938) protein is 7-cyano-7-deazaguanine synthase.